A 168-amino-acid chain; its full sequence is Oocyte-secreted protein 2 (168 aa).

The N-terminal stretch at 1-21 is a signal peptide; sequence MGVSMALEVLVYLAVLVWTCA.

It belongs to the PLAC1 family. As to expression, expressed in ovaries. Highly expressed in the germinal vesicles oocytes and metaphase II oocytes.

It localises to the secreted. It is found in the cytoplasm. This Mus musculus (Mouse) protein is Oocyte-secreted protein 2 (Oosp2).